We begin with the raw amino-acid sequence, 600 residues long: Aspartate--tRNA(Asp/Asn) ligase (600 aa).

Glu-175 provides a ligand contact to L-aspartate. Residues 199-202 (QLFK) are aspartate. Arg-221 contacts L-aspartate. ATP contacts are provided by residues 221 to 223 (RDE) and Gln-230. His-453 lines the L-aspartate pocket. Glu-487 is an ATP binding site. An L-aspartate-binding site is contributed by Arg-494. 539–542 (GWDR) contacts ATP. A disordered region spans residues 564 to 600 (GGVDPLTDAPAPITPLQRKESGIDAKPKAAENKPEEK). Positions 580–600 (QRKESGIDAKPKAAENKPEEK) are enriched in basic and acidic residues.

This sequence belongs to the class-II aminoacyl-tRNA synthetase family. Type 1 subfamily. In terms of assembly, homodimer.

The protein localises to the cytoplasm. It catalyses the reaction tRNA(Asx) + L-aspartate + ATP = L-aspartyl-tRNA(Asx) + AMP + diphosphate. Aspartyl-tRNA synthetase with relaxed tRNA specificity since it is able to aspartylate not only its cognate tRNA(Asp) but also tRNA(Asn). Reaction proceeds in two steps: L-aspartate is first activated by ATP to form Asp-AMP and then transferred to the acceptor end of tRNA(Asp/Asn). This is Aspartate--tRNA(Asp/Asn) ligase from Corynebacterium efficiens (strain DSM 44549 / YS-314 / AJ 12310 / JCM 11189 / NBRC 100395).